The primary structure comprises 57 residues: Large ribosomal subunit protein bL32c (57 aa).

The interval 1–21 (MAVPKKRTSKSKKNLRKNTWK) is disordered.

The protein belongs to the bacterial ribosomal protein bL32 family.

Its subcellular location is the plastid. It localises to the chloroplast. This chain is Large ribosomal subunit protein bL32c, found in Stigeoclonium helveticum (Green alga).